We begin with the raw amino-acid sequence, 182 residues long: Translation initiation factor IF-3, chloroplastic (182 aa).

The protein belongs to the IF-3 family. In terms of assembly, monomer.

It is found in the plastid. The protein localises to the chloroplast. IF-3 binds to the 30S ribosomal subunit and shifts the equilibrium between 70S ribosomes and their 50S and 30S subunits in favor of the free subunits, thus enhancing the availability of 30S subunits on which protein synthesis initiation begins. The chain is Translation initiation factor IF-3, chloroplastic from Porphyra purpurea (Red seaweed).